We begin with the raw amino-acid sequence, 255 residues long: MQIDAVTLFPEMFDSIARFGVSQRALDLGLWQFKAWNPRDFTHDNYRRVDDRPYGGGPGMVMQIEPLEQALDAARARQREAGVEASHVVYLSPQGARLTHAKAAELSQRPGLILLCGRYEGIDERLIATQVDEEISIGDYVLSGGELPAMVLADAVVRLLPGALNDAQSAYEDSFVDGLLDCPHYTRPEEYRGMRVPDVLLSGNHALIAKWRLKQSLGRTWQRRPELLQDRVLTKQESRLLAEYQQEQDIRKKPE.

Residues Gly-117 and Ile-137–Leu-142 each bind S-adenosyl-L-methionine.

It belongs to the RNA methyltransferase TrmD family. Homodimer.

Its subcellular location is the cytoplasm. It carries out the reaction guanosine(37) in tRNA + S-adenosyl-L-methionine = N(1)-methylguanosine(37) in tRNA + S-adenosyl-L-homocysteine + H(+). Functionally, specifically methylates guanosine-37 in various tRNAs. This is tRNA (guanine-N(1)-)-methyltransferase from Chromobacterium violaceum (strain ATCC 12472 / DSM 30191 / JCM 1249 / CCUG 213 / NBRC 12614 / NCIMB 9131 / NCTC 9757 / MK).